We begin with the raw amino-acid sequence, 390 residues long: Endonuclease 8-like 1 (390 aa).

The Schiff-base intermediate with DNA role is filled by Pro-2. The Proton donor role is filled by Glu-3. The Proton donor; for beta-elimination activity role is filled by Lys-54. Residue Asn-176 coordinates DNA. Residues 278–390 (TIWFQGDPGP…SLEPEGTSAS (113 aa)) are disordered. The span at 291–301 (KGRKSRKKKSK) shows a compositional bias: basic residues. A compositionally biased stretch (polar residues) spans 335-347 (TATQRPEGTSLQQ). Position 339 (Arg-339) interacts with DNA. The active-site Proton donor; for delta-elimination activity is the Arg-339.

This sequence belongs to the FPG family. In terms of tissue distribution, ubiquitous.

It localises to the cytoplasm. It is found in the cytoskeleton. The protein resides in the microtubule organizing center. The protein localises to the centrosome. Its subcellular location is the nucleus. It localises to the chromosome. The enzyme catalyses 2'-deoxyribonucleotide-(2'-deoxyribose 5'-phosphate)-2'-deoxyribonucleotide-DNA = a 3'-end 2'-deoxyribonucleotide-(2,3-dehydro-2,3-deoxyribose 5'-phosphate)-DNA + a 5'-end 5'-phospho-2'-deoxyribonucleoside-DNA + H(+). Involved in base excision repair of DNA damaged by oxidation or by mutagenic agents. Acts as a DNA glycosylase that recognizes and removes damaged bases. Has a preference for oxidized pyrimidines, such as thymine glycol, formamidopyrimidine (Fapy) and 5-hydroxyuracil. Has marginal activity towards 8-oxoguanine. Has AP (apurinic/apyrimidinic) lyase activity and introduces nicks in the DNA strand. Cleaves the DNA backbone by beta-delta elimination to generate a single-strand break at the site of the removed base with both 3'- and 5'-phosphates. Has DNA glycosylase/lyase activity towards mismatched uracil and thymine, in particular in U:C and T:C mismatches. Specifically binds 5-hydroxymethylcytosine (5hmC), suggesting that it acts as a specific reader of 5hmC. This is Endonuclease 8-like 1 (NEIL1) from Homo sapiens (Human).